A 363-amino-acid polypeptide reads, in one-letter code: LIM and cysteine-rich domains protein 1 (363 aa).

S16 carries the phosphoserine modification. Positions 99-206 (MIMTNPIATG…GEVALPGQGG (108 aa)) constitute a PET domain. The tract at residues 200-233 (ALPGQGGLPKEEGKQQEKPEGAETAAPTANGSLG) is disordered. Basic and acidic residues predominate over residues 208-220 (PKEEGKQQEKPEG). 2 LIM zinc-binding domains span residues 239–304 (YVCE…SLRP) and 305–363 (RCSG…SKRT).

In terms of assembly, interacts with beta-dystroglycan. Interacts with GATA1, GATA4 and GATA6. Highly expressed in both skeletal muscle and cardiac muscle.

Its subcellular location is the cytoplasm. The protein resides in the nucleus. Its function is as follows. Transcriptional cofactor that restricts GATA6 function by inhibiting DNA-binding, resulting in repression of GATA6 transcriptional activation of downstream target genes. Represses GATA6-mediated trans activation of lung- and cardiac tissue-specific promoters. Inhibits DNA-binding by GATA4 and GATA1 to the cTNC promoter. Plays a critical role in the development of cardiac hypertrophy via activation of calcineurin/nuclear factor of activated T-cells signaling pathway. This is LIM and cysteine-rich domains protein 1 (LMCD1) from Sus scrofa (Pig).